The chain runs to 248 residues: Granzyme-like protein 1 (248 aa).

Positions 1–18 are cleaved as a signal peptide; it reads MNLLLLLLTVSLAPTTEA. A propeptide spans 19–20 (activation peptide); it reads AE. The 226-residue stretch at 21–246 folds into the Peptidase S1 domain; that stretch reads IIGGHEADPH…FLSWIEETMK (226 aa). Cys50 and Cys66 are joined by a disulfide. His65 (charge relay system) is an active-site residue. N-linked (GlcNAc...) asparagine glycosylation is present at Asn72. The active-site Charge relay system is Asp109. Cystine bridges form between Cys143–Cys210 and Cys174–Cys189. Ser204 functions as the Charge relay system in the catalytic mechanism.

The protein belongs to the peptidase S1 family. Granzyme subfamily. As to expression, duodenum.

In terms of biological role, this enzyme is necessary for target cell lysis in cell-mediated immune responses. In Rattus norvegicus (Rat), this protein is Granzyme-like protein 1.